Here is a 384-residue protein sequence, read N- to C-terminus: 8-amino-7-oxononanoate synthase (384 aa).

Arg21 contributes to the substrate binding site. Pyridoxal 5'-phosphate is bound at residue 108 to 109; it reads GF. His133 contributes to the substrate binding site. Pyridoxal 5'-phosphate-binding residues include Ser179, His207, and Thr233. Residue Lys236 is modified to N6-(pyridoxal phosphate)lysine. Thr352 contributes to the substrate binding site.

The protein belongs to the class-II pyridoxal-phosphate-dependent aminotransferase family. BioF subfamily. Homodimer. It depends on pyridoxal 5'-phosphate as a cofactor.

The enzyme catalyses 6-carboxyhexanoyl-[ACP] + L-alanine + H(+) = (8S)-8-amino-7-oxononanoate + holo-[ACP] + CO2. It participates in cofactor biosynthesis; biotin biosynthesis. Functionally, catalyzes the decarboxylative condensation of pimeloyl-[acyl-carrier protein] and L-alanine to produce 8-amino-7-oxononanoate (AON), [acyl-carrier protein], and carbon dioxide. This is 8-amino-7-oxononanoate synthase from Escherichia coli O17:K52:H18 (strain UMN026 / ExPEC).